A 339-amino-acid chain; its full sequence is Anthranilate phosphoribosyltransferase (339 aa).

5-phospho-alpha-D-ribose 1-diphosphate is bound by residues G79, 82-83 (GD), S87, 89-92 (NIST), 107-115 (KHGNRSISS), and S119. Position 79 (G79) interacts with anthranilate. Residue S91 participates in Mg(2+) binding. Residue N110 coordinates anthranilate. An anthranilate-binding site is contributed by R165. Positions 224 and 225 each coordinate Mg(2+).

It belongs to the anthranilate phosphoribosyltransferase family. Homodimer. It depends on Mg(2+) as a cofactor.

The catalysed reaction is N-(5-phospho-beta-D-ribosyl)anthranilate + diphosphate = 5-phospho-alpha-D-ribose 1-diphosphate + anthranilate. It functions in the pathway amino-acid biosynthesis; L-tryptophan biosynthesis; L-tryptophan from chorismate: step 2/5. In terms of biological role, catalyzes the transfer of the phosphoribosyl group of 5-phosphorylribose-1-pyrophosphate (PRPP) to anthranilate to yield N-(5'-phosphoribosyl)-anthranilate (PRA). The chain is Anthranilate phosphoribosyltransferase from Listeria monocytogenes serovar 1/2a (strain ATCC BAA-679 / EGD-e).